We begin with the raw amino-acid sequence, 621 residues long: UvrABC system protein C (621 aa).

In terms of domain architecture, GIY-YIG spans 20 to 98 (TAPGVYRMYA…IKSLTPRYNV (79 aa)). In terms of domain architecture, UVR spans 207 to 242 (DLLAEELIQAMQVASEHLEFEQAARLRDLLTSLRSM).

It belongs to the UvrC family. Interacts with UvrB in an incision complex.

The protein localises to the cytoplasm. In terms of biological role, the UvrABC repair system catalyzes the recognition and processing of DNA lesions. UvrC both incises the 5' and 3' sides of the lesion. The N-terminal half is responsible for the 3' incision and the C-terminal half is responsible for the 5' incision. The chain is UvrABC system protein C from Xylella fastidiosa (strain Temecula1 / ATCC 700964).